A 532-amino-acid polypeptide reads, in one-letter code: Probable cytochrome c oxidase subunit 1 (532 aa).

8 helical membrane-spanning segments follow: residues 33–53 (IMYI…SLLF), 74–94 (VLIT…ALFG), 95–115 (GFGN…FPRL), 118–138 (ISFW…FVDG), 163–183 (MAIF…INLI), 200–220 (PLFV…MPVL), 252–272 (LFWF…FGIV), and 284–304 (IFGY…GFIV). Residue His-79 participates in Fe(II)-heme a binding. 2 residues coordinate Cu cation: His-258 and Tyr-262. The Cu cation site is built by His-307 and His-308. 2 consecutive transmembrane segments (helical) span residues 318-338 (ALIY…IKIF) and 355-375 (MLFS…GIIL). His-393 contributes to the heme a3 binding site. 3 helical membrane passes run 394-414 (FHYT…YYWF), 431-451 (FWIT…LGLA), and 473-493 (IGAG…FYTL). Residue His-395 coordinates Fe(II)-heme a.

The protein belongs to the heme-copper respiratory oxidase family.

Its subcellular location is the cell membrane. It carries out the reaction 4 Fe(II)-[cytochrome c] + O2 + 8 H(+)(in) = 4 Fe(III)-[cytochrome c] + 2 H2O + 4 H(+)(out). It participates in energy metabolism; oxidative phosphorylation. In terms of biological role, cytochrome c oxidase is the component of the respiratory chain that catalyzes the reduction of oxygen to water. Subunits 1-3 form the functional core of the enzyme complex. CO I is the catalytic subunit of the enzyme. Electrons originating in cytochrome c are transferred via the copper A center of subunit 2 and heme A of subunit 1 to the bimetallic center formed by heme A3 and copper B. The protein is Probable cytochrome c oxidase subunit 1 (ctaD) of Rickettsia bellii (strain RML369-C).